The following is a 393-amino-acid chain: Methylthioribose kinase (393 aa).

ATP contacts are provided by residues Asn-38, Lys-53, and Glu-107–Leu-109. Residue Asp-225 participates in substrate binding. Position 242-244 (Asp-242–Glu-244) interacts with ATP. A substrate-binding site is contributed by Arg-332.

Belongs to the methylthioribose kinase family. As to quaternary structure, homodimer.

The catalysed reaction is 5-(methylsulfanyl)-D-ribose + ATP = 5-(methylsulfanyl)-alpha-D-ribose 1-phosphate + ADP + H(+). It functions in the pathway amino-acid biosynthesis; L-methionine biosynthesis via salvage pathway; S-methyl-5-thio-alpha-D-ribose 1-phosphate from S-methyl-5'-thioadenosine (hydrolase route): step 2/2. Functionally, catalyzes the phosphorylation of methylthioribose into methylthioribose-1-phosphate. This chain is Methylthioribose kinase, found in Bacillus cereus (strain G9842).